Consider the following 313-residue polypeptide: 4-hydroxy-3-methylbut-2-enyl diphosphate reductase (313 aa).

Cys12 is a binding site for [4Fe-4S] cluster. Residues His41 and His74 each contribute to the (2E)-4-hydroxy-3-methylbut-2-enyl diphosphate site. Residues His41 and His74 each contribute to the dimethylallyl diphosphate site. Isopentenyl diphosphate is bound by residues His41 and His74. Residue Cys96 participates in [4Fe-4S] cluster binding. Residue His124 coordinates (2E)-4-hydroxy-3-methylbut-2-enyl diphosphate. Dimethylallyl diphosphate is bound at residue His124. Position 124 (His124) interacts with isopentenyl diphosphate. Glu126 functions as the Proton donor in the catalytic mechanism. Thr164 contributes to the (2E)-4-hydroxy-3-methylbut-2-enyl diphosphate binding site. Residue Cys194 coordinates [4Fe-4S] cluster. 4 residues coordinate (2E)-4-hydroxy-3-methylbut-2-enyl diphosphate: Ser222, Ser223, Asn224, and Ser266. Ser222, Ser223, Asn224, and Ser266 together coordinate dimethylallyl diphosphate. The isopentenyl diphosphate site is built by Ser222, Ser223, Asn224, and Ser266.

This sequence belongs to the IspH family. [4Fe-4S] cluster serves as cofactor.

It carries out the reaction isopentenyl diphosphate + 2 oxidized [2Fe-2S]-[ferredoxin] + H2O = (2E)-4-hydroxy-3-methylbut-2-enyl diphosphate + 2 reduced [2Fe-2S]-[ferredoxin] + 2 H(+). The catalysed reaction is dimethylallyl diphosphate + 2 oxidized [2Fe-2S]-[ferredoxin] + H2O = (2E)-4-hydroxy-3-methylbut-2-enyl diphosphate + 2 reduced [2Fe-2S]-[ferredoxin] + 2 H(+). It functions in the pathway isoprenoid biosynthesis; dimethylallyl diphosphate biosynthesis; dimethylallyl diphosphate from (2E)-4-hydroxy-3-methylbutenyl diphosphate: step 1/1. It participates in isoprenoid biosynthesis; isopentenyl diphosphate biosynthesis via DXP pathway; isopentenyl diphosphate from 1-deoxy-D-xylulose 5-phosphate: step 6/6. Its function is as follows. Catalyzes the conversion of 1-hydroxy-2-methyl-2-(E)-butenyl 4-diphosphate (HMBPP) into a mixture of isopentenyl diphosphate (IPP) and dimethylallyl diphosphate (DMAPP). Acts in the terminal step of the DOXP/MEP pathway for isoprenoid precursor biosynthesis. The sequence is that of 4-hydroxy-3-methylbut-2-enyl diphosphate reductase from Burkholderia pseudomallei (strain 1026b).